The primary structure comprises 338 residues: Tryptophan--tRNA ligase (338 aa).

ATP-binding positions include 12-14 and 20-21; these read QPT and GN. A 'HIGH' region motif is present at residues 13-21; it reads PTGDLHIGN. Residue Asp136 participates in L-tryptophan binding. ATP is bound by residues 148–150, Ile191, and 200–204; these read GED and KMSKS. Positions 200–204 match the 'KMSKS' region motif; sequence KMSKS.

The protein belongs to the class-I aminoacyl-tRNA synthetase family. Homodimer.

Its subcellular location is the cytoplasm. The catalysed reaction is tRNA(Trp) + L-tryptophan + ATP = L-tryptophyl-tRNA(Trp) + AMP + diphosphate + H(+). In terms of biological role, catalyzes the attachment of tryptophan to tRNA(Trp). This is Tryptophan--tRNA ligase from Prochlorococcus marinus subsp. pastoris (strain CCMP1986 / NIES-2087 / MED4).